Reading from the N-terminus, the 282-residue chain is Stage 0 sporulation protein J (282 aa).

The H-T-H motif DNA-binding region spans 139–158; that stretch reads EQLAKRLGKSRPHIANHLRL.

The protein belongs to the ParB family.

It is found in the cytoplasm. The protein resides in the nucleoid. Functionally, required for the initiation of sporulation and for normal chromosome segregation. Antagonizes sporulation inhibition by Soj. It probably interacts with a specific DNA site and other proteins involved in partitioning and cell division, and antagonizes Soj in response to cell cycle events related to chromosome partitioning. The chain is Stage 0 sporulation protein J from Bacillus subtilis (strain 168).